The primary structure comprises 172 residues: Small ribosomal subunit protein uS5 (172 aa).

An S5 DRBM domain is found at 13–76; the sequence is LIEKMVAVNR…DQARRSMIKV (64 aa).

Belongs to the universal ribosomal protein uS5 family. As to quaternary structure, part of the 30S ribosomal subunit. Contacts proteins S4 and S8.

Its function is as follows. With S4 and S12 plays an important role in translational accuracy. In terms of biological role, located at the back of the 30S subunit body where it stabilizes the conformation of the head with respect to the body. This is Small ribosomal subunit protein uS5 from Neisseria gonorrhoeae (strain ATCC 700825 / FA 1090).